The primary structure comprises 208 residues: Uracil phosphoribosyltransferase (208 aa).

Residues Arg78, Arg103, and 130-138 (DPMLATGGS) each bind 5-phospho-alpha-D-ribose 1-diphosphate. Uracil contacts are provided by residues Ile193 and 198-200 (GDA). Residue Asp199 coordinates 5-phospho-alpha-D-ribose 1-diphosphate.

Belongs to the UPRTase family. Mg(2+) is required as a cofactor.

It catalyses the reaction UMP + diphosphate = 5-phospho-alpha-D-ribose 1-diphosphate + uracil. It functions in the pathway pyrimidine metabolism; UMP biosynthesis via salvage pathway; UMP from uracil: step 1/1. Its activity is regulated as follows. Allosterically activated by GTP. Functionally, catalyzes the conversion of uracil and 5-phospho-alpha-D-ribose 1-diphosphate (PRPP) to UMP and diphosphate. This Proteus mirabilis (strain HI4320) protein is Uracil phosphoribosyltransferase.